The sequence spans 723 residues: Probable cadmium-transporting ATPase (723 aa).

Positions 12 to 75 constitute an HMA domain; sequence EMKAYRVQGF…AGAFENLKVT (64 aa). Cd(2+)-binding residues include Cys23 and Cys26. The next 5 membrane-spanning stretches (helical) occupy residues 103–123, 127–147, 168–188, 329–349, and 361–381; these read STLLYASLLIAFGYLSSYVNG, IVTTLLFLASMFIGGLSLFKV, IGGAIIGEWAEVAIVVILFAI, YYTPIIMIIAALVAIVPPLFF, and LAVLVVGCPCALVISTPISIV. Asp412 functions as the 4-aspartylphosphate intermediate in the catalytic mechanism. A run of 2 helical transmembrane segments spans residues 671–690 and 694–716; these read IIKANITFAIAIKFIALLLV and WLTLWIAILSDMGATLLVALNGL.

This sequence belongs to the cation transport ATPase (P-type) (TC 3.A.3) family. Type IB subfamily.

The protein resides in the cell membrane. The catalysed reaction is Cd(2+)(in) + ATP + H2O = Cd(2+)(out) + ADP + phosphate + H(+). Couples the hydrolysis of ATP with the export of cadmium. In Alkalihalophilus pseudofirmus (strain ATCC BAA-2126 / JCM 17055 / OF4) (Bacillus pseudofirmus), this protein is Probable cadmium-transporting ATPase (cadA).